Reading from the N-terminus, the 466-residue chain is Ankyrin repeat and SOCS box protein 18 (466 aa).

ANK repeat units lie at residues 119–148, 151–180, 184–213, 218–247, 251–288, and 292–321; these read ELTT…DPDA, GGRG…DPDL, EGLA…SVQR, GRDT…HVDA, RGET…EADA, and DERS…DAGA. The 59-residue stretch at 405 to 463 folds into the SOCS box domain; that stretch reads QMHKPFYQSLFALALTPRCLQHLCRCALRRLFGKRCFDLIPLLPLPKPLQNYLLLEPQG.

The protein belongs to the ankyrin SOCS box (ASB) family.

It functions in the pathway protein modification; protein ubiquitination. In terms of biological role, may be a substrate-recognition component of a SCF-like ECS (Elongin-Cullin-SOCS-box protein) E3 ubiquitin-protein ligase complex which mediates the ubiquitination and subsequent proteasomal degradation of target proteins. The polypeptide is Ankyrin repeat and SOCS box protein 18 (ASB18) (Homo sapiens (Human)).